The following is a 426-amino-acid chain: Maintenance of mitochondrial morphology protein 1 (426 aa).

At 1–100 (MTDSENESTE…KFSGWSFAQG (100 aa)) the chain is on the lumenal side. A helical transmembrane segment spans residues 101-121 (FFVGQLSIVLLFIFFLKFFIF). Residues 122–426 (SDEPSKSKNP…NTREEKPTEL (305 aa)) are Cytoplasmic-facing. Residues 194–409 (PAESLDWFNV…EPRFQFVRLP (216 aa)) enclose the SMP-LTD domain.

The protein belongs to the MMM1 family. Homodimer. Component of the ER-mitochondria encounter structure (ERMES) or MDM complex, composed of MMM1, MDM10, MDM12 and MDM34. An MMM1 homodimer associates with one molecule of MDM12 on each side in a pairwise head-to-tail manner, and the SMP-LTD domains of MMM1 and MDM12 generate a continuous hydrophobic tunnel for phospholipid trafficking.

The protein resides in the endoplasmic reticulum membrane. Component of the ERMES/MDM complex, which serves as a molecular tether to connect the endoplasmic reticulum (ER) and mitochondria. Components of this complex are involved in the control of mitochondrial shape and protein biogenesis, and function in nonvesicular lipid trafficking between the ER and mitochondria. The MDM12-MMM1 subcomplex functions in the major beta-barrel assembly pathway that is responsible for biogenesis of all outer membrane beta-barrel proteins, and acts in a late step after the SAM complex. The MDM10-MDM12-MMM1 subcomplex further acts in the TOM40-specific pathway after the action of the MDM12-MMM1 complex. Essential for establishing and maintaining the structure of mitochondria and maintenance of mtDNA nucleoids. This is Maintenance of mitochondrial morphology protein 1 from Saccharomyces cerevisiae (strain AWRI1631) (Baker's yeast).